The primary structure comprises 283 residues: Bifunctional protein FolD (283 aa).

NADP(+) is bound by residues 165 to 167 (GAS) and Ser190.

Belongs to the tetrahydrofolate dehydrogenase/cyclohydrolase family. In terms of assembly, homodimer.

It carries out the reaction (6R)-5,10-methylene-5,6,7,8-tetrahydrofolate + NADP(+) = (6R)-5,10-methenyltetrahydrofolate + NADPH. The enzyme catalyses (6R)-5,10-methenyltetrahydrofolate + H2O = (6R)-10-formyltetrahydrofolate + H(+). It functions in the pathway one-carbon metabolism; tetrahydrofolate interconversion. Catalyzes the oxidation of 5,10-methylenetetrahydrofolate to 5,10-methenyltetrahydrofolate and then the hydrolysis of 5,10-methenyltetrahydrofolate to 10-formyltetrahydrofolate. This is Bifunctional protein FolD from Cupriavidus taiwanensis (strain DSM 17343 / BCRC 17206 / CCUG 44338 / CIP 107171 / LMG 19424 / R1) (Ralstonia taiwanensis (strain LMG 19424)).